Reading from the N-terminus, the 633-residue chain is Chaperone protein HtpG (633 aa).

An a; substrate-binding region spans residues 1–341 (MTAPHETMSF…SADLPLNVSR (341 aa)). A b region spans residues 342-562 (ELLQESRDVK…EGDMSGYLQR (221 aa)). The tract at residues 563–633 (LLKQAGQKAP…YVQRVNKLLA (71 aa)) is c.

It belongs to the heat shock protein 90 family. Homodimer.

The protein localises to the cytoplasm. Its function is as follows. Molecular chaperone. Has ATPase activity. The sequence is that of Chaperone protein HtpG from Cupriavidus taiwanensis (strain DSM 17343 / BCRC 17206 / CCUG 44338 / CIP 107171 / LMG 19424 / R1) (Ralstonia taiwanensis (strain LMG 19424)).